The sequence spans 1264 residues: BRCA2-interacting transcriptional repressor EMSY (1264 aa).

Residues 1-442 form an interaction with BRCA2 region; sequence MPVVWPTLLD…LPKPVTATLP (442 aa). Residues 16–114 form the ENT domain; that stretch reads CKRILRKLEL…EWSIEGRRLV (99 aa). The tract at residues 118-122 is interaction with ZMYND11; that stretch reads PRLVP. Positions 145–179 are disordered; the sequence is PVPAETASKDGVSCSDEDEKPRKRRRTNSSSSSPV. Phosphothreonine is present on T171. Phosphoserine occurs at positions 173 and 177. S192 and S200 each carry an O-linked (GlcNAc) serine glycan. S202 is modified (phosphoserine). T235 is a glycosylation site (O-linked (GlcNAc) threonine). Over residues 364–406 the composition is skewed to low complexity; the sequence is FPKQHQQSPKQQLQQVQQQTQQPVAQPSSVSQQQQPQQSALPP. The tract at residues 364–407 is disordered; sequence FPKQHQQSPKQQLQQVQQQTQQPVAQPSSVSQQQQPQQSALPPG. T465 and T470 each carry an O-linked (GlcNAc) threonine glycan. A glycan (O-linked (GlcNAc) serine) is linked at S521. Residues 660–671 show a composition bias toward polar residues; it reads SRVADASNSSAQ. Residues 660–700 are disordered; sequence SRVADASNSSAQEGKEEPQGYTDSSSSSTESSQSSQDSQPV. Positions 681–698 are enriched in low complexity; the sequence is TDSSSSSTESSQSSQDSQ. S782 and S785 each carry phosphoserine. T1069 carries O-linked (GlcNAc) threonine glycosylation. S1085 is subject to Phosphoserine. The segment at 1232 to 1264 is disordered; the sequence is QLDDDETAMEQDIDSSTEDGTEPSPSQSAVERS. Positions 1233–1252 are enriched in acidic residues; it reads LDDDETAMEQDIDSSTEDGT. Positions 1254-1264 are enriched in polar residues; the sequence is PSPSQSAVERS.

In terms of assembly, homodimer. Interacts with the transactivation domain of BRCA2. Interacts with CBX1 (via chromoshadow domain). Interacts with ZMYND11. Does not interact with CBX3 or CBX5. Component of a nuclear receptor-mediated transcription complex composed of at least ZNF335, CCAR2 and EMSY; the complex stimulates the transcription of nuclear receptor target genes such as SOX9 and HOXA1. Within the complex interacts with CCAR2 and ZNF335. Components of this complex may associate with components of a histone methylation complex to form a complex at least composed of ZNF335, HCFC1, CCAR2, EMSY, MKI67, RBBP5, ASH2L and WDR5. Within this complex, interacts with ASH2L and RBBP5.

It localises to the nucleus. Functionally, regulator which is able to repress transcription, possibly via its interaction with a multiprotein chromatin remodeling complex that modifies the chromatin. Its interaction with BRCA2 suggests that it may play a central role in the DNA repair function of BRCA2. Mediates ligand-dependent transcriptional activation by nuclear hormone receptors. The chain is BRCA2-interacting transcriptional repressor EMSY from Mus musculus (Mouse).